Here is a 542-residue protein sequence, read N- to C-terminus: Neurofilament light polypeptide (542 aa).

Ser-2 bears the N-acetylserine mark. The head stretch occupies residues 2–93 (SSFSYEPYFS…KSIRTQEKAQ (92 aa)). Thr-21 carries an O-linked (GlcNAc) threonine glycan. An Asymmetric dimethylarginine; alternate modification is found at Arg-23. Arg-23 carries the omega-N-methylarginine; alternate modification. Ser-27 carries an O-linked (GlcNAc) serine glycan. At Arg-30 the chain carries Omega-N-methylarginine. At Tyr-43 the chain carries Phosphotyrosine. 3 positions are modified to phosphoserine: Ser-56, Ser-67, and Ser-103. Residues 90–401 (EKAQLQDLND…KLLEGEETRL (312 aa)) form the IF rod domain. Residues 94 to 125 (LQDLNDRFASFIERVHELEQQNKVLEAELLVL) are coil 1A. The segment at 126–138 (RQKHSEPSRFRAL) is linker 1. The segment at 139–234 (YEQEIRDLRL…KVHEEEIAEL (96 aa)) is coil 1B. A linker 12 region spans residues 235–253 (QAQIQYAQISVEMDVSSKP). Positions 254-272 (DLSAALKDIRAQYEKLAAK) are coil 2A. A linker 2 region spans residues 273 to 281 (NMQNAEEWF). The coil 2B stretch occupies residues 282–397 (KSRFTVLTES…AAYRKLLEGE (116 aa)). The epitope; recognized by IF-specific monoclonal antibody stretch occupies residues 382 to 392 (ALDIEIAAYRK). The tail, subdomain A stretch occupies residues 398–444 (ETRLSFTSVGSITSGYSQSSQVFGRSAYSGLQSSSYLMSARAFPAYY). Residues 398-542 (ETRLSFTSVG…GEEQAAKKKD (145 aa)) form a tail region. The interval 445 to 542 (TSHVQEEQSE…GEEQAAKKKD (98 aa)) is tail, subdomain B (acidic). The interval 451 to 542 (EQSEVEETIE…GEEQAAKKKD (92 aa)) is disordered. Residue Ser-453 is modified to Phosphoserine. Over residues 460-471 (EATKAEEAKDEP) the composition is skewed to basic and acidic residues. Positions 472–527 (PSEGEAEEEEKEKEEGEEEEGAEEEEAAKDESEDAKEEEGGEGEEEDTKESEEEEK) are enriched in acidic residues. Phosphoserine is present on residues Ser-473 and Ser-503. Residue Thr-519 is modified to Phosphothreonine. 2 positions are modified to phosphoserine: Ser-522 and Ser-531. A compositionally biased stretch (basic and acidic residues) spans 528 to 542 (KEESAGEEQAAKKKD).

It belongs to the intermediate filament family. Forms homodimers (in vitro). Forms heterodimers with NEFH or NEFM; which can further hetero-oligomerize (in vitro). Forms heterodimers with INA (in vitro). Interacts with ARHGEF28. Interacts with TRIM2. O-glycosylated; contains three N-acetylglucosamine side chains. Post-translationally, phosphorylated in the head and rod regions by the PKC kinase PKN1, leading to the inhibition of polymerization. In terms of processing, ubiquitinated in the presence of TRIM2 and UBE2D1. In terms of tissue distribution, expressed in the dorsal root ganglion neurons (at protein level).

It is found in the cell projection. It localises to the axon. Its subcellular location is the cytoplasm. The protein localises to the cytoskeleton. In terms of biological role, neurofilaments usually contain three intermediate filament proteins: NEFL, NEFM, and NEFH which are involved in the maintenance of neuronal caliber. May additionally cooperate with the neuronal intermediate filament proteins PRPH and INA to form neuronal filamentous networks. The protein is Neurofilament light polypeptide (Nefl) of Rattus norvegicus (Rat).